The chain runs to 308 residues: D-alanine--D-alanine ligase (308 aa).

The ATP-grasp domain maps to 106 to 305 (KMLWKAFGLP…FEQLVVKILE (200 aa)). 136–191 (VEKLGLPLMVKPSLEGSSVGLTKVNAIDDLKSAVEFALQYDETVLIEEWLSGDELT) is a binding site for ATP. D259, E272, and N274 together coordinate Mg(2+).

Belongs to the D-alanine--D-alanine ligase family. Mg(2+) serves as cofactor. The cofactor is Mn(2+).

Its subcellular location is the cytoplasm. The catalysed reaction is 2 D-alanine + ATP = D-alanyl-D-alanine + ADP + phosphate + H(+). The protein operates within cell wall biogenesis; peptidoglycan biosynthesis. Its function is as follows. Cell wall formation. The polypeptide is D-alanine--D-alanine ligase (Histophilus somni (strain 2336) (Haemophilus somnus)).